Consider the following 463-residue polypeptide: Sugar transporter ERD6-like 7 (463 aa).

Transmembrane regions (helical) follow at residues 26–46, 69–89, 103–123, 126–146, 157–177, 181–201, 264–284, 299–319, 327–347, 357–377, 396–416, and 426–446; these read WMVY…GSCA, LFGS…GPIA, AFCV…ALDL, LATG…IAEI, TLNQ…GTLV, VLAL…FFIP, VLIA…GICF, LGMI…APIV, LLLV…VSFY, AVPV…SAGM, VAGG…SYTF, and GTFL…IAIV.

Belongs to the major facilitator superfamily. Sugar transporter (TC 2.A.1.1) family.

It localises to the membrane. Functionally, sugar transporter. In Arabidopsis thaliana (Mouse-ear cress), this protein is Sugar transporter ERD6-like 7.